A 402-amino-acid polypeptide reads, in one-letter code: Phosphoglycerate kinase (402 aa).

Substrate is bound by residues 24–26, arginine 40, 63–66, arginine 122, and arginine 155; these read DFN and HFGR. Residues lysine 206, glycine 297, glutamate 328, and 357–360 each bind ATP; that span reads GGDS.

It belongs to the phosphoglycerate kinase family. In terms of assembly, monomer.

The protein localises to the cytoplasm. It carries out the reaction (2R)-3-phosphoglycerate + ATP = (2R)-3-phospho-glyceroyl phosphate + ADP. It participates in carbohydrate degradation; glycolysis; pyruvate from D-glyceraldehyde 3-phosphate: step 2/5. In Synechococcus sp. (strain ATCC 27144 / PCC 6301 / SAUG 1402/1) (Anacystis nidulans), this protein is Phosphoglycerate kinase.